A 219-amino-acid polypeptide reads, in one-letter code: Peptide methionine sulfoxide reductase MsrA (219 aa).

Positions 1-20 (MGLFRSPRQNLPTAADALPG) are disordered. Residue C55 is part of the active site.

This sequence belongs to the MsrA Met sulfoxide reductase family.

It carries out the reaction L-methionyl-[protein] + [thioredoxin]-disulfide + H2O = L-methionyl-(S)-S-oxide-[protein] + [thioredoxin]-dithiol. The enzyme catalyses [thioredoxin]-disulfide + L-methionine + H2O = L-methionine (S)-S-oxide + [thioredoxin]-dithiol. In terms of biological role, has an important function as a repair enzyme for proteins that have been inactivated by oxidation. Catalyzes the reversible oxidation-reduction of methionine sulfoxide in proteins to methionine. The chain is Peptide methionine sulfoxide reductase MsrA from Rhodospirillum centenum (strain ATCC 51521 / SW).